An 88-amino-acid polypeptide reads, in one-letter code: Small ribosomal subunit protein bS20 (88 aa).

The interval 1–28 is disordered; the sequence is MANTVQARKRARQAVKQNEHNSSLRSKL.

It belongs to the bacterial ribosomal protein bS20 family.

Its function is as follows. Binds directly to 16S ribosomal RNA. The protein is Small ribosomal subunit protein bS20 of Polynucleobacter necessarius subsp. necessarius (strain STIR1).